A 690-amino-acid polypeptide reads, in one-letter code: Elongation factor G (690 aa).

A tr-type G domain is found at 8–283; that stretch reads DKYRNIGIMA…AVVDFLPSPL (276 aa). Residues 17–24, 81–85, and 135–138 contribute to the GTP site; these read AHIDAGKT, DTPGH, and NKLD.

It belongs to the TRAFAC class translation factor GTPase superfamily. Classic translation factor GTPase family. EF-G/EF-2 subfamily.

Its subcellular location is the cytoplasm. Functionally, catalyzes the GTP-dependent ribosomal translocation step during translation elongation. During this step, the ribosome changes from the pre-translocational (PRE) to the post-translocational (POST) state as the newly formed A-site-bound peptidyl-tRNA and P-site-bound deacylated tRNA move to the P and E sites, respectively. Catalyzes the coordinated movement of the two tRNA molecules, the mRNA and conformational changes in the ribosome. In Zymomonas mobilis subsp. mobilis (strain ATCC 31821 / ZM4 / CP4), this protein is Elongation factor G.